A 116-amino-acid chain; its full sequence is Ly-6/neurotoxin-like protein 1 (116 aa).

The first 20 residues, 1–20, serve as a signal peptide directing secretion; it reads MTPLLTLILVVLMGLPLAQA. Residues 21-105 enclose the UPAR/Ly6 domain; that stretch reads LDCHVCAYNG…LATPATLALA (85 aa). 5 disulfides stabilise this stretch: cysteine 23–cysteine 46, cysteine 26–cysteine 33, cysteine 39–cysteine 64, cysteine 68–cysteine 85, and cysteine 86–cysteine 91. Asparagine 92 carries the GPI-anchor amidated asparagine lipid modification. Positions 93–116 are cleaved as a propeptide — removed in mature form; it reads GAGLATPATLALAPILLATLWGLL.

As to quaternary structure, interacts with nAChRs containing alpha-4:beta-2 (CHRNA4:CHRNB2) and alpha-7 (CHRNA7) subunits. Interacts with CHRNA4 probably in the endoplasmic reticulum prior to nAChR pentameric assembly. Interacts with KCNA2/Potassium voltage-gated channel subfamily A member 2.

The protein localises to the cell membrane. Its subcellular location is the cell projection. It is found in the dendrite. It localises to the endoplasmic reticulum. Acts in different tissues through interaction to nicotinic acetylcholine receptors (nAChRs). The proposed role as modulator of nAChR activity seems to be dependent on the nAChR subtype and stoichiometry, and to involve an effect on nAChR trafficking and its cell surface expression, and on single channel properties of the nAChR inserted in the plasma membrane. Modulates functional properties of nicotinic acetylcholine receptors (nAChRs) to prevent excessive excitation, and hence neurodegeneration. Enhances desensitization by increasing both the rate and extent of desensitization of alpha-4:beta-2-containing nAChRs and slowing recovery from desensitization. Promotes large amplitude ACh-evoked currents through alpha-4:beta-2 nAChRs. Is involved in regulation of the nAChR pentameric assembly in the endoplasmic reticulum. Shifts stoichiometry from high sensitivity alpha-4(2):beta-2(3) to low sensitivity alpha-4(3):beta-2(2) nAChR. In vitro modulates alpha-3:beta-4-containing nAChRs. Reduces cell surface expression of (alpha-3:beta-4)(2):beta-4 and (alpha-3:beta-4)(2):alpha-5 nAChRs suggesting an interaction with nAChR alpha-3(-):(+)beta-4 subunit interfaces and an allosteric mode. Corresponding single channel effects characterized by decreased unitary conductance, altered burst proportions and enhanced desensitization/inactivation seem to depend on nAChR alpha:alpha subunit interfaces and are greater in (alpha-3:beta-2)(2):alpha-3 when compared to (alpha-3:beta-2)(2):alpha-5 nAChRs. Prevents plasticity in the primary visual cortex late in life. The polypeptide is Ly-6/neurotoxin-like protein 1 (Pan troglodytes (Chimpanzee)).